The following is a 208-amino-acid chain: Thiamine-phosphate synthase (208 aa).

4-amino-2-methyl-5-(diphosphooxymethyl)pyrimidine contacts are provided by residues 37–39 (QVR) and N70. D71 and D90 together coordinate Mg(2+). Position 109 (T109) interacts with 4-amino-2-methyl-5-(diphosphooxymethyl)pyrimidine. 135–137 (TTS) contributes to the 2-[(2R,5Z)-2-carboxy-4-methylthiazol-5(2H)-ylidene]ethyl phosphate binding site. K138 is a 4-amino-2-methyl-5-(diphosphooxymethyl)pyrimidine binding site. A166 provides a ligand contact to 2-[(2R,5Z)-2-carboxy-4-methylthiazol-5(2H)-ylidene]ethyl phosphate.

The protein belongs to the thiamine-phosphate synthase family. Mg(2+) serves as cofactor.

It catalyses the reaction 2-[(2R,5Z)-2-carboxy-4-methylthiazol-5(2H)-ylidene]ethyl phosphate + 4-amino-2-methyl-5-(diphosphooxymethyl)pyrimidine + 2 H(+) = thiamine phosphate + CO2 + diphosphate. It carries out the reaction 2-(2-carboxy-4-methylthiazol-5-yl)ethyl phosphate + 4-amino-2-methyl-5-(diphosphooxymethyl)pyrimidine + 2 H(+) = thiamine phosphate + CO2 + diphosphate. The enzyme catalyses 4-methyl-5-(2-phosphooxyethyl)-thiazole + 4-amino-2-methyl-5-(diphosphooxymethyl)pyrimidine + H(+) = thiamine phosphate + diphosphate. It participates in cofactor biosynthesis; thiamine diphosphate biosynthesis; thiamine phosphate from 4-amino-2-methyl-5-diphosphomethylpyrimidine and 4-methyl-5-(2-phosphoethyl)-thiazole: step 1/1. Condenses 4-methyl-5-(beta-hydroxyethyl)thiazole monophosphate (THZ-P) and 2-methyl-4-amino-5-hydroxymethyl pyrimidine pyrophosphate (HMP-PP) to form thiamine monophosphate (TMP). This chain is Thiamine-phosphate synthase, found in Salinispora tropica (strain ATCC BAA-916 / DSM 44818 / JCM 13857 / NBRC 105044 / CNB-440).